Here is a 166-residue protein sequence, read N- to C-terminus: Small ribosomal subunit protein uS5 (166 aa).

An S5 DRBM domain is found at 11-74 (LIEKLVSVKR…ENAKKNMVSV (64 aa)).

Belongs to the universal ribosomal protein uS5 family. In terms of assembly, part of the 30S ribosomal subunit. Contacts proteins S4 and S8.

Its function is as follows. With S4 and S12 plays an important role in translational accuracy. In terms of biological role, located at the back of the 30S subunit body where it stabilizes the conformation of the head with respect to the body. This is Small ribosomal subunit protein uS5 from Francisella tularensis subsp. holarctica (strain LVS).